The following is a 123-amino-acid chain: EVKLVESGGGLVQPGGSLRLSCATSGFTFSDFYMEWVRQPPGKRLEWIAASRNKANDYTTEYSASVKGRFIVSRDTSQSILYLQMNALRAEDTAIYYCARDYYDYPHWYFDVWGAGTTVTVSS.

The Ig-like domain maps to 1–114; it reads EVKLVESGGG…YPHWYFDVWG (114 aa).

This chain is Ig heavy chain V region HPCM6, found in Mus musculus (Mouse).